Reading from the N-terminus, the 215-residue chain is Adenylate kinase (215 aa).

Position 10–15 (10–15) interacts with ATP; the sequence is GAGKGT. The NMP stretch occupies residues 30 to 59; it reads STGDILRENVKNQTELGKKAKEYMDKGLLV. AMP-binding positions include Thr-31, Arg-36, 57-59, 85-88, and Gln-92; these read LLV and GFPR. The tract at residues 126–163 is LID; the sequence is GRRICKSCGASFHVVYRPPKKEGICDICGGQLYQREDD. ATP is bound at residue Arg-127. 2 residues coordinate Zn(2+): Cys-130 and Cys-133. Residue 136-137 participates in ATP binding; that stretch reads SF. Cys-150 and Cys-153 together coordinate Zn(2+). AMP-binding residues include Arg-160 and Arg-171. Glu-199 lines the ATP pocket.

The protein belongs to the adenylate kinase family. Monomer.

The protein localises to the cytoplasm. It carries out the reaction AMP + ATP = 2 ADP. It participates in purine metabolism; AMP biosynthesis via salvage pathway; AMP from ADP: step 1/1. Catalyzes the reversible transfer of the terminal phosphate group between ATP and AMP. Plays an important role in cellular energy homeostasis and in adenine nucleotide metabolism. The protein is Adenylate kinase of Caldicellulosiruptor saccharolyticus (strain ATCC 43494 / DSM 8903 / Tp8T 6331).